Here is a 382-residue protein sequence, read N- to C-terminus: Pyrimidine monooxygenase RutA (382 aa).

Residues isoleucine 68–lysine 69, asparagine 134, glutamate 143, arginine 159–tyrosine 160, and serine 209 each bind FMN.

Belongs to the NtaA/SnaA/DszA monooxygenase family. RutA subfamily.

The catalysed reaction is uracil + FMNH2 + NADH + O2 = (Z)-3-ureidoacrylate + FMN + NAD(+) + H2O + H(+). It catalyses the reaction thymine + FMNH2 + NADH + O2 = (Z)-2-methylureidoacrylate + FMN + NAD(+) + H2O + H(+). Its function is as follows. Catalyzes the pyrimidine ring opening between N-3 and C-4 by an unusual flavin hydroperoxide-catalyzed mechanism, adding oxygen atoms in the process to yield ureidoacrylate peracid, that immediately reacts with FMN forming ureidoacrylate and FMN-N(5)-oxide. The FMN-N(5)-oxide reacts spontaneously with NADH to produce FMN. Requires the flavin reductase RutF to regenerate FMN in vivo. This is Pyrimidine monooxygenase RutA from Escherichia coli O150:H5 (strain SE15).